Here is a 149-residue protein sequence, read N- to C-terminus: Protein FAM72C (149 aa).

Belongs to the FAM72 family.

This chain is Protein FAM72C (FAM72C), found in Homo sapiens (Human).